The chain runs to 299 residues: ATP phosphoribosyltransferase (299 aa).

Belongs to the ATP phosphoribosyltransferase family. Long subfamily. As to quaternary structure, equilibrium between an active dimeric form, an inactive hexameric form and higher aggregates. Interconversion between the various forms is largely reversible and is influenced by the natural substrates and inhibitors of the enzyme. Mg(2+) serves as cofactor.

The protein resides in the cytoplasm. The enzyme catalyses 1-(5-phospho-beta-D-ribosyl)-ATP + diphosphate = 5-phospho-alpha-D-ribose 1-diphosphate + ATP. Its pathway is amino-acid biosynthesis; L-histidine biosynthesis; L-histidine from 5-phospho-alpha-D-ribose 1-diphosphate: step 1/9. With respect to regulation, feedback inhibited by histidine. Its function is as follows. Catalyzes the condensation of ATP and 5-phosphoribose 1-diphosphate to form N'-(5'-phosphoribosyl)-ATP (PR-ATP). Has a crucial role in the pathway because the rate of histidine biosynthesis seems to be controlled primarily by regulation of HisG enzymatic activity. This chain is ATP phosphoribosyltransferase, found in Proteus mirabilis (strain HI4320).